We begin with the raw amino-acid sequence, 570 residues long: Zeta-carotene desaturase, chloroplastic/chromoplastic (570 aa).

A compositionally biased stretch (low complexity) spans 1 to 16; that stretch reads MASVAATTTLAPALAP. The segment at 1–33 is disordered; that stretch reads MASVAATTTLAPALAPRRARPGTGLVPPRRASA.

This sequence belongs to the zeta carotene desaturase family. Requires NAD(+) as cofactor. It depends on NADP(+) as a cofactor. FAD is required as a cofactor.

Its subcellular location is the plastid. It is found in the chloroplast. It localises to the chromoplast. The catalysed reaction is 9,9'-di-cis-zeta-carotene + 2 a quinone = 7,7',9,9'-tetra-cis-lycopene + 2 a quinol. The protein operates within carotenoid biosynthesis; lycopene biosynthesis. Catalyzes the conversion of zeta-carotene to lycopene via the intermediary of neurosporene. It carries out two consecutive desaturations (introduction of double bonds) at positions C-7 and C-7'. This is Zeta-carotene desaturase, chloroplastic/chromoplastic (ZDS1) from Zea mays (Maize).